Consider the following 471-residue polypeptide: Soluble pyridine nucleotide transhydrogenase (471 aa).

41 to 50 (EREPSVGGGC) provides a ligand contact to FAD.

This sequence belongs to the class-I pyridine nucleotide-disulfide oxidoreductase family. The cofactor is FAD.

It is found in the cytoplasm. The enzyme catalyses NAD(+) + NADPH = NADH + NADP(+). In terms of biological role, conversion of NADPH, generated by peripheral catabolic pathways, to NADH, which can enter the respiratory chain for energy generation. This is Soluble pyridine nucleotide transhydrogenase from Aliivibrio fischeri (strain ATCC 700601 / ES114) (Vibrio fischeri).